A 288-amino-acid polypeptide reads, in one-letter code: 4-hydroxy-tetrahydrodipicolinate synthase (288 aa).

Residue Thr-42 coordinates pyruvate. The active-site Proton donor/acceptor is Tyr-129. The Schiff-base intermediate with substrate role is filled by Lys-157. Residue Ile-198 coordinates pyruvate.

Belongs to the DapA family. As to quaternary structure, homotetramer; dimer of dimers.

It localises to the cytoplasm. It catalyses the reaction L-aspartate 4-semialdehyde + pyruvate = (2S,4S)-4-hydroxy-2,3,4,5-tetrahydrodipicolinate + H2O + H(+). It functions in the pathway amino-acid biosynthesis; L-lysine biosynthesis via DAP pathway; (S)-tetrahydrodipicolinate from L-aspartate: step 3/4. Its function is as follows. Catalyzes the condensation of (S)-aspartate-beta-semialdehyde [(S)-ASA] and pyruvate to 4-hydroxy-tetrahydrodipicolinate (HTPA). The sequence is that of 4-hydroxy-tetrahydrodipicolinate synthase from Chlamydia abortus (strain DSM 27085 / S26/3) (Chlamydophila abortus).